The sequence spans 468 residues: MSQQQDKQPSENKLWGGRFTGATDPLMDLYNASLPYDKVMYDADLTGTKVYTQGLNKLGLITTEELNLIHQGLEQIRQEWHDNKFIIKAGDEDIHTANERRLGEIIGKNISGKVHTGRSRNDQVATDMRIFVRESLLNLSKILHQFITAILERAHKEIDVLMPGYTHLQKAQPIRWAHWLSSYATYFTEDYKRLQEIITRVNQSPLGSGALAGHPYGIDREFLAKGLGFDGVIGNSLTAVSDRDFVVESLFWSTLFMNHISRFSEDLIIYSSGEFGFIKLADAYSTGSSLMPQKKNPDSLELLRGKSGRVFGQLSGFLMSIKSIPSTYNKDMQEDKEPLFDALTTVEHSILIATGVISTLSIDKQNMEKALTMDMLATDLADYLVRKGVPFRETHHISGECVRKAEEEKLSGIDQLSFEQFQQIDSRFEKDVMETFDFEASVERRDALGGTAKSAVLKQLENLKSILS.

2-(N(omega)-L-arginino)succinate-binding residues include Ser33, Asn121, and Thr166. His167 (proton acceptor) is an active-site residue. The Proton donor role is filled by Ser288. The 2-(N(omega)-L-arginino)succinate site is built by Asn296, Tyr328, Gln333, and Lys336.

Belongs to the lyase 1 family. Argininosuccinate lyase subfamily. Homotetramer.

It carries out the reaction 2-(N(omega)-L-arginino)succinate = fumarate + L-arginine. Its pathway is amino-acid biosynthesis; L-arginine biosynthesis; L-arginine from L-ornithine and carbamoyl phosphate: step 3/3. This is Argininosuccinate lyase (ARG4) from Candida albicans (Yeast).